A 1479-amino-acid polypeptide reads, in one-letter code: Tyrosine-protein kinase BAZ1B (1479 aa).

The 107-residue stretch at 20 to 126 folds into the WAC domain; it reads EPLFTIPHTQ…GEECDFEVGK (107 aa). The disordered stretch occupies residues 146–212; the sequence is EAVEKKSDGA…TSLKKGERKW (67 aa). 2 stretches are compositionally biased toward basic and acidic residues: residues 148-165 and 173-195; these read VEKK…DKEN and LQKK…DRAR. Phosphoserine is present on residues Ser152, Ser158, and Ser161. Residues 207–213 carry the C motif motif; it reads KGERKWA. Thr266 carries the phosphothreonine modification. Positions 302–333 are disordered; that stretch reads NPSTKRRNTGSPDRKPSKKPKRDSSSLSSPLN. Ser325, Ser330, Ser345, Ser361, and Ser374 each carry phosphoserine. Disordered regions lie at residues 376–433 and 448–472; these read NNNK…KTPK and TQKM…HKHL. Residues 381–396 show a composition bias toward basic residues; sequence HSFHIPKKGPAAKKPG. Polar residues predominate over residues 415–425; the sequence is GQKSTGNSKSP. The span at 454 to 465 shows a compositional bias: low complexity; sequence TPRSSGGVPRSS. The stretch at 537–587 forms a coiled coil; sequence ASMSEEQRKEYLKKKRQELKERLREKAKERREREMLERLEKQKRFEDQELG. Residues 605-669 enclose the DDT domain; the sequence is NTLFGDVALV…LQTLLQDEIA (65 aa). Ser706, Ser709, and Ser717 each carry phosphoserine. Residues 774–809 are a coiled coil; that stretch reads SAELWKERLAVLKEENDKKRAEKQKRKEMEARNKEN. Residues 789-813 form a disordered region; sequence NDKKRAEKQKRKEMEARNKENGKEE. Lys827 participates in a covalent cross-link: Glycyl lysine isopeptide (Lys-Gly) (interchain with G-Cter in SUMO1); alternate. Lys827 participates in a covalent cross-link: Glycyl lysine isopeptide (Lys-Gly) (interchain with G-Cter in SUMO2); alternate. Residues Lys854, Lys1043, Lys1089, and Lys1107 each participate in a glycyl lysine isopeptide (Lys-Gly) (interchain with G-Cter in SUMO2) cross-link. A coiled-coil region spans residues 854 to 890; the sequence is KRKREIQERETKVRLEREAEEERMRKHKAAAEKAFQE. Residues 1184–1234 form a PHD-type zinc finger; sequence NARCKVCRKKGEDDKLILCDECNKAFHLFCLRPALYEVPDGEWQCPACQPP. Positions 1231 to 1324 are disordered; that stretch reads CQPPTARRNS…SRPKDDPEVD (94 aa). Positions 1254 to 1277 are enriched in acidic residues; that stretch reads SEGDESGEEEEEEEEEEEEEEDYE. Residues 1257-1284 are a coiled coil; the sequence is DESGEEEEEEEEEEEEEEDYEVAGLRLR. Positions 1305–1316 are enriched in basic residues; the sequence is PGKKSHPARRSR. Ser1315 is subject to Phosphoserine. Lys1331 carries the post-translational modification N6-acetyllysine. A Bromo domain is found at 1335–1439; that stretch reads RRQSLELQKC…QCLLALLQKH (105 aa). Residues Ser1338, Ser1464, Ser1466, and Ser1468 each carry the phosphoserine modification. The tract at residues 1451-1479 is disordered; the sequence is RKFPDRLADDEGDSDSESVGQSRGRRQKK.

It belongs to the WAL family. BAZ1B subfamily. In terms of assembly, component of the WICH-1 ISWI chromatin remodeling complex, at least composed of SMARCA1 and BAZ1B/WSTF, which regulates the spacing of histone octamers on the DNA template to facilitate access to DNA. Within the WICH-1 ISWI chromatin remodeling complex interacts with SMARCA1; the interaction is direct. Component of the WICH-5 ISWI chromatin remodeling complex (also called the WICH complex), at least composed of SMARCA5/SNF2H and BAZ1B/WSTF, which regulates the spacing of histone octamers on the DNA template to facilitate access to DNA. Within the WICH-5 ISWI chromatin remodeling complex interacts with SMARCA5/SNF2H; the interaction is direct. Component of the B-WICH chromatin remodeling complex, at least composed of SMARCA5/SNF2H, BAZ1B/WSTF, SF3B1, DEK, MYO1C, ERCC6, MYBBP1A and DDX21. Within the B-WICH chromatin remodeling complex, interacts with SMARCA5/SNF2H, DDX21, DEK, MYBBP1A, SF3B1 and ERCC6. Interacts with MYO1C. Interacts with PCNA; the interaction is direct and is required for BAZ1B/WSTF binding to replication foci during S phase. Interacts with CDT1. The cofactor is Mn(2+).

It localises to the nucleus. The catalysed reaction is L-tyrosyl-[protein] + ATP = O-phospho-L-tyrosyl-[protein] + ADP + H(+). Atypical tyrosine-protein kinase that plays a central role in chromatin remodeling and acts as a transcription regulator. Involved in DNA damage response by phosphorylating 'Tyr-142' of histone H2AX (H2AXY142ph). H2AXY142ph plays a central role in DNA repair and acts as a mark that distinguishes between apoptotic and repair responses to genotoxic stress. Regulatory subunit of the ATP-dependent WICH-1 and WICH-5 ISWI chromatin remodeling complexes, which form ordered nucleosome arrays on chromatin and facilitate access to DNA during DNA-templated processes such as DNA replication, transcription, and repair. Both complexes regulate the spacing of nucleosomes along the chromatin and have the ability to slide mononucleosomes to the center of a DNA template. The WICH-1 ISWI chromatin remodeling complex has a lower ATP hydrolysis rate than the WICH-5 ISWI chromatin remodeling complex. The WICH-5 ISWI chromatin remodeling complex regulates the transcription of various genes, has a role in RNA polymerase I transcription. Within the B-WICH complex has a role in RNA polymerase III transcription. Mediates the recruitment of the WICH-5 ISWI chromatin remodeling complex to replication foci during DNA replication. This chain is Tyrosine-protein kinase BAZ1B (Baz1b), found in Mus musculus (Mouse).